Reading from the N-terminus, the 337-residue chain is Heat-inducible transcription repressor HrcA (337 aa).

It belongs to the HrcA family.

Functionally, negative regulator of class I heat shock genes (grpE-dnaK-dnaJ and groELS operons). Prevents heat-shock induction of these operons. In Arthrobacter sp. (strain FB24), this protein is Heat-inducible transcription repressor HrcA.